Reading from the N-terminus, the 588-residue chain is Aspartate--tRNA ligase (588 aa).

An L-aspartate-binding site is contributed by Glu177. Residues 201 to 204 are aspartate; the sequence is QLFK. Arg223 provides a ligand contact to L-aspartate. Residues 223-225 and Gln232 each bind ATP; that span reads RDE. Residue His451 participates in L-aspartate binding. Glu485 contributes to the ATP binding site. Residue Arg492 coordinates L-aspartate. 537 to 540 provides a ligand contact to ATP; the sequence is GLDR.

This sequence belongs to the class-II aminoacyl-tRNA synthetase family. Type 1 subfamily. Homodimer.

It is found in the cytoplasm. The catalysed reaction is tRNA(Asp) + L-aspartate + ATP = L-aspartyl-tRNA(Asp) + AMP + diphosphate. Its function is as follows. Catalyzes the attachment of L-aspartate to tRNA(Asp) in a two-step reaction: L-aspartate is first activated by ATP to form Asp-AMP and then transferred to the acceptor end of tRNA(Asp). This chain is Aspartate--tRNA ligase, found in Staphylococcus epidermidis (strain ATCC 35984 / DSM 28319 / BCRC 17069 / CCUG 31568 / BM 3577 / RP62A).